The sequence spans 86 residues: Large ribosomal subunit protein bL27 (86 aa).

It belongs to the bacterial ribosomal protein bL27 family.

The sequence is that of Large ribosomal subunit protein bL27 from Xanthomonas axonopodis pv. citri (strain 306).